Reading from the N-terminus, the 198-residue chain is Ribonuclease 3-like protein 1 (198 aa).

The segment covering 85 to 110 has biased composition (basic and acidic residues); sequence KKLAPKPDEEHTTTTKPISKDDESKT. A disordered region spans residues 85 to 115; it reads KKLAPKPDEEHTTTTKPISKDDESKTRRGSA. A DRBM domain is found at 114–191; the sequence is SAKSVLHEMC…AEGALWYLEH (78 aa).

The sequence is that of Ribonuclease 3-like protein 1 (RTL1) from Arabidopsis thaliana (Mouse-ear cress).